A 127-amino-acid chain; its full sequence is Major sperm protein 19/31/40/45/50/51/53/59/61/65/81/113/142 (127 aa).

N-acetylalanine is present on A2. Residues 9 to 126 form the MSP domain; that stretch reads DIQTQPGTKI…RRKNLPIEYN (118 aa).

As to quaternary structure, helical subfilaments are built from MSP dimers; filaments are formed from two subfilaments coiling round one another; and filaments themselves supercoil to produce bundles. Sperm.

The protein resides in the cell projection. The protein localises to the pseudopodium. It is found in the cytoplasm. Its subcellular location is the cytoskeleton. Its function is as follows. Central component in molecular interactions underlying sperm crawling. Forms an extensive filament system that extends from sperm villipoda, along the leading edge of the pseudopod. This chain is Major sperm protein 19/31/40/45/50/51/53/59/61/65/81/113/142 (msp-19), found in Caenorhabditis elegans.